A 639-amino-acid chain; its full sequence is Coiled-coil domain-containing protein 93 homolog (639 aa).

Residues 250–275 (KLESQLSGKDGSGKDTTEAEREEEEK) form a disordered region. The span at 260–275 (GSGKDTTEAEREEEEK) shows a compositional bias: basic and acidic residues. Positions 332–492 (AEKLHRQKIT…KNRDISLIQR (161 aa)) form a coiled coil.

This sequence belongs to the CCDC93 family.

This is Coiled-coil domain-containing protein 93 homolog from Dictyostelium discoideum (Social amoeba).